The chain runs to 276 residues: Large ribosomal subunit protein uL2 (276 aa).

The segment at 224–276 (AMNPIDHPHGGGEGKTSGGRNPVTPWGVSTKGKKTRKKNKSSNKYIKRVSDKG) is disordered. The span at 254 to 270 (KGKKTRKKNKSSNKYIK) shows a compositional bias: basic residues.

This sequence belongs to the universal ribosomal protein uL2 family. Part of the 50S ribosomal subunit. Forms a bridge to the 30S subunit in the 70S ribosome.

One of the primary rRNA binding proteins. Required for association of the 30S and 50S subunits to form the 70S ribosome, for tRNA binding and peptide bond formation. It has been suggested to have peptidyltransferase activity; this is somewhat controversial. Makes several contacts with the 16S rRNA in the 70S ribosome. The protein is Large ribosomal subunit protein uL2 of Ehrlichia ruminantium (strain Gardel).